We begin with the raw amino-acid sequence, 734 residues long: Platelet glycoprotein Ib alpha chain (734 aa).

A signal peptide spans 1 to 16 (MALLILLFLLPSPLHS). One can recognise an LRRNT domain in the interval 17–47 (QHTCSISKVTSLLEVNCENKKLTALPADLPA). Residues 17-612 (QHTCSISKVT…LNSDFCCFLP (596 aa)) are Extracellular-facing. A disulfide bond links Cys20 and Cys33. LRR repeat units follow at residues 48–69 (DTGI…SLVH), 72–93 (HLTY…GKLI), 94–115 (KLEN…GWAL), 117–140 (ALTT…DGLS), 141–162 (QLQE…LLLP), 165–188 (KLKK…DGLE), and 189–210 (DLDT…FFGT). Residues 221–282 (NSWYCDCEIL…YSYPGKGCPT (62 aa)) enclose the LRRCT domain. Cystine bridges form between Cys225–Cys264 and Cys227–Cys280. Tyr292 is subject to Sulfotyrosine. Residues Thr301, Thr311, Thr315, and Thr316 are each glycosylated (O-linked (GalNAc...) threonine). Ser335 is a glycosylation site (O-linked (GalNAc...) serine). O-linked (GalNAc...) threonine glycosylation is found at Thr339, Thr348, Thr358, and Thr377. Ser382 carries O-linked (GalNAc...) serine glycosylation. Thr384, Thr385, and Thr405 each carry an O-linked (GalNAc...) threonine glycan. 2 disordered regions span residues 406–429 (STLT…TPEH) and 460–526 (EPST…PEPS). Thr512, Thr516, Thr519, Thr530, Thr542, Thr546, Thr550, and Thr562 each carry an O-linked (GalNAc...) threonine glycan. O-linked (GalNAc...) serine glycosylation is present at Ser572. Thr573 carries an O-linked (GalNAc...) threonine glycan. A helical membrane pass occupies residues 613–633 (LGFYVLGLLWLLFASVVLILL). Residues 634–734 (LTWTWHVTPH…VGIRYSGHSL (101 aa)) are Cytoplasmic-facing. Phosphoserine is present on residues Ser711 and Ser714.

As to quaternary structure, two GP-Ib beta are disulfide-linked to one GP-Ib alpha. GP-IX is complexed with the GP-Ib heterodimer via a non covalent linkage. Interacts with FLNB. Interacts with FLNA (via filamin repeats 4, 9, 12, 17, 19, 21, and 23). Post-translationally, O-glycosylated. In terms of processing, glycocalicin is the product of a proteolytic cleavage/shedding, catalyzed by ADAM17, which releases most of the extracellular domain. Binding sites for vWF and thrombin are in this part of the protein.

Its subcellular location is the membrane. GP-Ib, a surface membrane protein of platelets, participates in the formation of platelet plugs by binding to the A1 domain of vWF, which is already bound to the subendothelium. This is Platelet glycoprotein Ib alpha chain (Gp1ba) from Mus musculus (Mouse).